Consider the following 352-residue polypeptide: Ion-translocating oxidoreductase complex subunit D (352 aa).

Helical transmembrane passes span 20 to 40 (IMLLVLLAAVPGIAAQLWFFG), 42 to 62 (GTLVQILLASVSALLAEALVL), 78 to 109 (ALLTGLLLAVSIPPLAPWWMVVLGTVFAVIIA), 123 to 143 (PAMIGYVVLLISFPVQMTSWL), and 148 to 168 (IAVNIPGFIDAIQVIFSGHTA). T187 carries the FMN phosphoryl threonine modification. Helical transmembrane passes span 214-234 (ILAGVGWQWVNLAWLAGGVWL), 242-262 (WHIPLSFLVTLALCATLGWLF), 267-287 (LAAPQIHLLSGATMLGAFFIL), 301-321 (LIFGALAGLLVWMIRSFGGYP), and 322-342 (DGVAFAVLLANITVPLIDYYT).

The protein belongs to the NqrB/RnfD family. As to quaternary structure, the complex is composed of six subunits: RsxA, RsxB, RsxC, RsxD, RsxE and RsxG. FMN serves as cofactor.

The protein localises to the cell inner membrane. Its function is as follows. Part of a membrane-bound complex that couples electron transfer with translocation of ions across the membrane. Required to maintain the reduced state of SoxR. This chain is Ion-translocating oxidoreductase complex subunit D, found in Escherichia coli O6:H1 (strain CFT073 / ATCC 700928 / UPEC).